A 317-amino-acid chain; its full sequence is Transcriptional regulator LsrR (317 aa).

Residues 33–56 constitute a DNA-binding region (H-T-H motif); it reads QSEISDRLGLTRLKVSRLLEKGHQ.

Belongs to the SorC transcriptional regulatory family.

Its subcellular location is the cytoplasm. Its activity is regulated as follows. Inactivated by phosphorylated autoinducer-2 (phospho-AI-2). Phospho-AI-2 acts by binding to LsrR, which is then unable to bind to the promoter regions, allowing the transcription of the target genes. Transcriptional regulator that represses the expression of the lsr operon in the absence of the quorum-sensing signaling molecule autoinducer 2 (AI-2). It also represses the expression of the lsrRK operon. Acts by binding directly to the lsrA and lsrR promoter regions. In the presence of phosphorylated autoinducer-2 (phospho-AI-2), LsrR is inactivated, leading to the transcription of the genes. This Escherichia coli O139:H28 (strain E24377A / ETEC) protein is Transcriptional regulator LsrR (lsrR).